The primary structure comprises 547 residues: Chaperonin GroEL (547 aa).

ATP is bound by residues 29–32 (TLGP), lysine 50, 86–90 (DGTTT), glycine 414, 478–480 (NAA), and aspartate 494.

It belongs to the chaperonin (HSP60) family. In terms of assembly, forms a cylinder of 14 subunits composed of two heptameric rings stacked back-to-back. Interacts with the co-chaperonin GroES.

The protein localises to the cytoplasm. The enzyme catalyses ATP + H2O + a folded polypeptide = ADP + phosphate + an unfolded polypeptide.. In terms of biological role, together with its co-chaperonin GroES, plays an essential role in assisting protein folding. The GroEL-GroES system forms a nano-cage that allows encapsulation of the non-native substrate proteins and provides a physical environment optimized to promote and accelerate protein folding. The protein is Chaperonin GroEL of Saccharophagus degradans (strain 2-40 / ATCC 43961 / DSM 17024).